The chain runs to 893 residues: 104 kDa microneme/rhoptry antigen (893 aa).

Residues 1–19 form the signal peptide; that stretch reads MKFLVLLFNILCLFPILGA. Disordered stretches follow at residues 492 to 666, 681 to 799, and 818 to 873; these read SKKK…FDPK, KTKE…PTGK, and KEHM…RKPD. Composition is skewed to basic and acidic residues over residues 525–565 and 573–591; these read SESK…EHKP and KRPE…ESPK. The span at 595 to 606 shows a compositional bias: low complexity; it reads RPVSPQRPVSPK. Composition is skewed to basic and acidic residues over residues 731–755, 788–797, and 818–830; these read EEVK…DSPT, EAGRILRDPT, and KEHM…KIVV. Residues 831–841 are compositionally biased toward acidic residues; sequence DDDGTEADDED. The span at 851 to 869 shows a compositional bias: basic residues; sequence STVRRRRPRPKKSSKSSKP. Asp873 carries the GPI-anchor amidated aspartate lipid modification. A propeptide spans 874–893 (removed in mature form); it reads SAFVPSIIFIFLVSLIVGIL.

It is found in the cell membrane. The chain is 104 kDa microneme/rhoptry antigen from Theileria annulata.